The following is a 78-amino-acid chain: Large ribosomal subunit protein bL28 (78 aa).

Residues 1–25 are disordered; the sequence is MSRVCQVTGKRPTVGNNRSHARNAT.

It belongs to the bacterial ribosomal protein bL28 family.

The protein is Large ribosomal subunit protein bL28 of Alteromonas mediterranea (strain DSM 17117 / CIP 110805 / LMG 28347 / Deep ecotype).